Consider the following 443-residue polypeptide: tRNA-2-methylthio-N(6)-dimethylallyladenosine synthase (443 aa).

The 118-residue stretch at 3–120 (SKLYIRTFGC…LPDLIDARRR (118 aa)) folds into the MTTase N-terminal domain. [4Fe-4S] cluster-binding residues include C12, C49, C83, C157, C161, and C164. The region spanning 143 to 375 (RTEGSTAFVS…QEKIQLNAQA (233 aa)) is the Radical SAM core domain. In terms of domain architecture, TRAM spans 378–441 (QGMVDTVQRI…SHTLRGEISD (64 aa)).

Belongs to the methylthiotransferase family. MiaB subfamily. As to quaternary structure, monomer. Requires [4Fe-4S] cluster as cofactor.

It localises to the cytoplasm. The enzyme catalyses N(6)-dimethylallyladenosine(37) in tRNA + (sulfur carrier)-SH + AH2 + 2 S-adenosyl-L-methionine = 2-methylsulfanyl-N(6)-dimethylallyladenosine(37) in tRNA + (sulfur carrier)-H + 5'-deoxyadenosine + L-methionine + A + S-adenosyl-L-homocysteine + 2 H(+). Its function is as follows. Catalyzes the methylthiolation of N6-(dimethylallyl)adenosine (i(6)A), leading to the formation of 2-methylthio-N6-(dimethylallyl)adenosine (ms(2)i(6)A) at position 37 in tRNAs that read codons beginning with uridine. This chain is tRNA-2-methylthio-N(6)-dimethylallyladenosine synthase, found in Nitrosomonas europaea (strain ATCC 19718 / CIP 103999 / KCTC 2705 / NBRC 14298).